The following is a 147-amino-acid chain: uncharacterized protein (147 aa).

The next 2 membrane-spanning stretches (helical) occupy residues 21-41 and 67-87; these read LMLWIAILIFVIAFAMIIVFV and ALFGLVFSVLGYLITALSIPL.

The protein resides in the cell membrane. This is an uncharacterized protein from Ureaplasma parvum serovar 3 (strain ATCC 700970).